Here is a 384-residue protein sequence, read N- to C-terminus: MQRHLLLGLAGLPALLSAQRVSVTCSFATVAANGETCDSMAATWGLDTATFQSLNPKAKCPEVIGGEQYCVVGTVTTVTGEPTTAPATTSTQTTTTTTTEVTSTTVPGNGITTPVPVQPNLVSNCNKFYFVNKGDNCADITARYNLDLSDFLEWNPKAGNSCSGLWANAYACVSVIGYVPKPKPKPTSTSTKPPTATGNGIPTPLPTQPGMTDGCNKFYLVKPGETCADIASRNGVSLSDFLQWNPHAGNACSGLWANAYACLGMVAFSLKSRFRVDCTGDAHNVVNIAGDQGQCINTDCSVGSLEIAAAGVCPDGEVQISYWEQPGCQGKWFGYGYAKRGECRGLWTNGWKFKAMHLRCAKSQDDCVNKGSCAYDPEPAQGVC.

Positions 1-18 (MQRHLLLGLAGLPALLSA) are cleaved as a signal peptide. Residues 27 to 71 (FATVAANGETCDSMAATWGLDTATFQSLNPKAKCPEVIGGEQYCV) enclose the LysM 1 domain. Residues 81–106 (EPTTAPATTSTQTTTTTTTEVTSTTV) show a composition bias toward low complexity. A disordered region spans residues 81-112 (EPTTAPATTSTQTTTTTTTEVTSTTVPGNGIT). Positions 127-173 (KFYFVNKGDNCADITARYNLDLSDFLEWNPKAGNSCSGLWANAYACV) constitute a LysM 2 domain. The tract at residues 183–206 (KPKPTSTSTKPPTATGNGIPTPLP) is disordered. Low complexity predominate over residues 186–195 (PTSTSTKPPT). The region spanning 217–263 (KFYLVKPGETCADIASRNGVSLSDFLQWNPHAGNACSGLWANAYACL) is the LysM 3 domain.

This sequence belongs to the secreted LysM effector family.

Functionally, might have a role in sequestration of chitin oligosaccharides (breakdown products of fungal cell walls that are released during invasion and act as triggers of host immunity) to dampen host defense. This is Secreted LysM effector Blys7 from Beauveria bassiana (strain ARSEF 2860) (White muscardine disease fungus).